A 1376-amino-acid chain; its full sequence is Phospholipid-transporting ATPase DRS2 (1376 aa).

Residues 1-10 (MAGRPTGGPQ) are compositionally biased toward gly residues. 2 disordered regions span residues 1 to 151 (MAGR…AAAR) and 180 to 217 (GYSEMDLPLTEPGGGGGGAGGGGHSRADSSGIDPPKRD). At 1-306 (MAGRPTGGPQ…QIPGLSPTNR (306 aa)) the chain is on the cytoplasmic side. The segment covering 40-50 (DLMRTYTRDQE) has biased composition (basic and acidic residues). Over residues 85 to 96 (QSSSSNNNNNNN) the composition is skewed to low complexity. The span at 97–115 (VSAPYSRSGRQYSQTSDLG) shows a compositional bias: polar residues. The segment covering 191–203 (PGGGGGGAGGGGH) has biased composition (gly residues). Residues 307-327 (FTTIIPLVAVLMVSAGKELVE) traverse the membrane as a helical segment. The Extracellular segment spans residues 328–509 (DYRRKQADAA…KVEKKLNTLV (182 aa)). 3 N-linked (GlcNAc...) asparagine glycosylation sites follow: Asn-339, Asn-433, and Asn-490. The helical transmembrane segment at 510 to 530 (LLLVGILMVLSIISTVGDLII) threads the bilayer. The Cytoplasmic segment spans residues 531 to 559 (RRVEGDAISYLMLDQPDTAGKIAETFFKD). A helical transmembrane segment spans residues 560–580 (MVTYWVLFSSLVPISLFVTVE). The Extracellular segment spans residues 581–1107 (MVKYWHGILI…VFSGAVIYES (527 aa)). Asp-625 serves as the catalytic 4-aspartylphosphate intermediate. The ATP site is built by Asp-625, Lys-626, and Thr-627. Asp-625 provides a ligand contact to Mg(2+). Thr-627 serves as a coordination point for Mg(2+). Asn-679 carries N-linked (GlcNAc...) asparagine glycosylation. ATP is bound by residues Glu-720 and Phe-761. N-linked (GlcNAc...) asparagine glycosylation is present at Asn-762. Residues Ser-763, Lys-766, Lys-784, Arg-817, Thr-818, Thr-898, Gly-899, Asp-900, Arg-991, and Lys-997 each coordinate ATP. Asp-1018 provides a ligand contact to Mg(2+). ATP contacts are provided by Asn-1021 and Asp-1022. Asp-1022 contacts Mg(2+). A glycan (N-linked (GlcNAc...) asparagine) is linked at Asn-1083. A helical transmembrane segment spans residues 1108-1128 (WTLTFYNVFYTVLPPLALGIL). At 1129–1165 (DQFISARLLDRYPQLYSMGQQNQFFRMKVFIEWLLNA) the chain is on the cytoplasmic side. The chain crosses the membrane as a helical span at residues 1166 to 1186 (VYHSIILYVFGELIWHGDLIL). Over 1187–1190 (ENGQ) the chain is Extracellular. Residues 1191-1211 (IAGHWMWGTALYAPVLLTVLG) traverse the membrane as a helical segment. A 1,2-diacyl-sn-glycero-3-phospho-(1D-myo-inositol 4-phosphate) is bound at residue Lys-1212. At 1212–1224 (KAGLVTSNWTKYH) the chain is on the cytoplasmic side. The helical transmembrane segment at 1225 to 1245 (VIAIPGSMAIWWIFIAVYGTV) threads the bilayer. At 1246-1257 (APMIPFSPEFHG) the chain is on the extracellular side. The helical transmembrane segment at 1258-1278 (IVPKLYSSPIFWLQSFALAIL) threads the bilayer. Topologically, residues 1279–1376 (CLLRDFAWKY…TSSRPQGQGT (98 aa)) are cytoplasmic. Residues Arg-1282, Trp-1286, Lys-1287, Tyr-1298, and His-1299 each coordinate a 1,2-diacyl-sn-glycero-3-phospho-(1D-myo-inositol 4-phosphate).

Belongs to the cation transport ATPase (P-type) (TC 3.A.3) family. Type IV subfamily. Mg(2+) serves as cofactor.

The protein localises to the cell membrane. Its subcellular location is the golgi apparatus. It localises to the trans-Golgi network membrane. The enzyme catalyses ATP + H2O + phospholipidSide 1 = ADP + phosphate + phospholipidSide 2.. It catalyses the reaction a 1,2-diacyl-sn-glycero-3-phospho-L-serine(out) + ATP + H2O = a 1,2-diacyl-sn-glycero-3-phospho-L-serine(in) + ADP + phosphate + H(+). The catalysed reaction is a 1,2-diacyl-sn-glycero-3-phosphoethanolamine(out) + ATP + H2O = a 1,2-diacyl-sn-glycero-3-phosphoethanolamine(in) + ADP + phosphate + H(+). Its function is as follows. Catalytic component of a P4-ATPase flippase complex which catalyzes the hydrolysis of ATP coupled to the transport of phosphatidylserine and small amounts of ethanolamine from the lumen to the cytosolic leaflet of the trans-Golgi network and cell membrane and ensures the maintenance of asymmetric distribution of phospholipids. Required for efficient vesicle transport during toxin secretion. This is Phospholipid-transporting ATPase DRS2 (DRS2) from Verticillium dahliae (strain VdLs.17 / ATCC MYA-4575 / FGSC 10137) (Verticillium wilt).